A 266-amino-acid polypeptide reads, in one-letter code: Large ribosomal subunit protein uL2m (266 aa).

The protein belongs to the universal ribosomal protein uL2 family.

Its subcellular location is the mitochondrion. The polypeptide is Large ribosomal subunit protein uL2m (mrpl2) (Dictyostelium discoideum (Social amoeba)).